We begin with the raw amino-acid sequence, 394 residues long: Elongation factor Tu (394 aa).

Positions 10–204 (KPHVNIGTIG…AVDSWIPLPE (195 aa)) constitute a tr-type G domain. A G1 region spans residues 19–26 (GHVDHGKT). Position 19–26 (19–26 (GHVDHGKT)) interacts with GTP. Thr-26 serves as a coordination point for Mg(2+). The G2 stretch occupies residues 60–64 (GITIN). The interval 81–84 (DCPG) is G3. Residues 81–85 (DCPGH) and 136–139 (NKCD) contribute to the GTP site. Residues 136 to 139 (NKCD) are G4. Residues 174–176 (SGL) form a G5 region.

It belongs to the TRAFAC class translation factor GTPase superfamily. Classic translation factor GTPase family. EF-Tu/EF-1A subfamily. As to quaternary structure, monomer.

The protein resides in the cytoplasm. It carries out the reaction GTP + H2O = GDP + phosphate + H(+). GTP hydrolase that promotes the GTP-dependent binding of aminoacyl-tRNA to the A-site of ribosomes during protein biosynthesis. The chain is Elongation factor Tu from Ureaplasma parvum serovar 3 (strain ATCC 27815 / 27 / NCTC 11736).